A 106-amino-acid polypeptide reads, in one-letter code: Cell division protein FtsB (106 aa).

Over 1–3 the chain is Cytoplasmic; the sequence is MGK. The helical transmembrane segment at 4–21 threads the bilayer; that stretch reads LTLLLLVLLGWLQYSLWL. The Periplasmic segment spans residues 22–106; the sequence is GKNGIHDFVR…GTPSTQNNAQ (85 aa). Residues 31 to 62 are a coiled coil; it reads RVKEDVAAQEANNSTLKARNDQLFAEIDDLNG.

This sequence belongs to the FtsB family. Part of a complex composed of FtsB, FtsL and FtsQ.

It is found in the cell inner membrane. In terms of biological role, essential cell division protein. May link together the upstream cell division proteins, which are predominantly cytoplasmic, with the downstream cell division proteins, which are predominantly periplasmic. In Yersinia pseudotuberculosis serotype O:1b (strain IP 31758), this protein is Cell division protein FtsB.